Reading from the N-terminus, the 559-residue chain is Potassium-transporting ATPase potassium-binding subunit (559 aa).

Helical transmembrane passes span 5 to 25, 27 to 47, 63 to 83, 132 to 152, 170 to 190, 253 to 273, 283 to 303, 327 to 347, 356 to 376, 379 to 399, 416 to 436, 484 to 504, and 524 to 544; these read GFLLIASFLLILLVLAKPLGS, LARLIAAVPLPGVAGIERILW, LLALLTLNLLGLGILFCLLFW, GLTVQNFLSAATGIAVVFALI, LVRITLWILFPVALIIALFFI, LAQMLAIFLIPAALCFAFGEA, LLWAMSFIFVVCVAVVMWAEV, FGVLASSLFAVVTTAASCGAV, ALGGMVPMWLMQIGEVVFGGV, GLYGMLLFVLLAVFIAGLMIG, MTALAILVTPMLVLLGSALAM, LLAFCMFVGRFGVIIPVMAIA, and GALFIGLLIGTVLLVGALTFI.

This sequence belongs to the KdpA family. As to quaternary structure, the system is composed of three essential subunits: KdpA, KdpB and KdpC.

Its subcellular location is the cell inner membrane. In terms of biological role, part of the high-affinity ATP-driven potassium transport (or Kdp) system, which catalyzes the hydrolysis of ATP coupled with the electrogenic transport of potassium into the cytoplasm. This subunit binds the periplasmic potassium ions and delivers the ions to the membrane domain of KdpB through an intramembrane tunnel. The sequence is that of Potassium-transporting ATPase potassium-binding subunit from Salmonella typhimurium (strain LT2 / SGSC1412 / ATCC 700720).